The primary structure comprises 341 residues: L-sulfolactate dehydrogenase (341 aa).

It belongs to the LDH2/MDH2 oxidoreductase family.

Its subcellular location is the cytoplasm. It catalyses the reaction a (2S)-2-hydroxycarboxylate + NAD(+) = a 2-oxocarboxylate + NADH + H(+). Its pathway is cofactor biosynthesis; coenzyme M biosynthesis; sulfoacetaldehyde from phosphoenolpyruvate and sulfite: step 3/4. The protein operates within cofactor biosynthesis; 5,6,7,8-tetrahydromethanopterin biosynthesis. In terms of biological role, catalyzes the reduction of sulfopyruvate to (R)-sulfolactate. Involved in the biosynthesis of both coenzyme M (with (R)-sulfolactate) and methanopterin (with alpha-ketoglutarate). In Methanothermobacter thermautotrophicus (strain ATCC 29096 / DSM 1053 / JCM 10044 / NBRC 100330 / Delta H) (Methanobacterium thermoautotrophicum), this protein is L-sulfolactate dehydrogenase (comC).